Here is a 93-residue protein sequence, read N- to C-terminus: Ferredoxin-2 (93 aa).

Residues 2–91 (YKVTLKTPDG…DVVIETHKED (90 aa)) enclose the 2Fe-2S ferredoxin-type domain. [2Fe-2S] cluster contacts are provided by C37, C42, C45, and C75.

Belongs to the 2Fe2S plant-type ferredoxin family. Requires [2Fe-2S] cluster as cofactor.

Its subcellular location is the plastid. The protein resides in the chloroplast. Functionally, ferredoxins are iron-sulfur proteins that transfer electrons in a wide variety of metabolic reactions. The polypeptide is Ferredoxin-2 (Equisetum telmateia (Great horsetail)).